The primary structure comprises 398 residues: Acetate kinase (398 aa).

Asn9 contributes to the Mg(2+) binding site. Lys16 lines the ATP pocket. Arg90 is a substrate binding site. Asp147 functions as the Proton donor/acceptor in the catalytic mechanism. ATP is bound by residues 207–211, 282–284, and 330–334; these read HIGNG, DLR, and GVGEN. Mg(2+) is bound at residue Glu384.

The protein belongs to the acetokinase family. Homodimer. Requires Mg(2+) as cofactor. It depends on Mn(2+) as a cofactor.

The protein resides in the cytoplasm. The catalysed reaction is acetate + ATP = acetyl phosphate + ADP. It functions in the pathway metabolic intermediate biosynthesis; acetyl-CoA biosynthesis; acetyl-CoA from acetate: step 1/2. In terms of biological role, catalyzes the formation of acetyl phosphate from acetate and ATP. Can also catalyze the reverse reaction. This Staphylococcus carnosus (strain TM300) protein is Acetate kinase.